The sequence spans 183 residues: Glutathione-regulated potassium-efflux system ancillary protein KefG (183 aa).

This sequence belongs to the NAD(P)H dehydrogenase (quinone) family. KefG subfamily. As to quaternary structure, interacts with KefB.

The protein resides in the cell inner membrane. It carries out the reaction a quinone + NADH + H(+) = a quinol + NAD(+). The catalysed reaction is a quinone + NADPH + H(+) = a quinol + NADP(+). Regulatory subunit of a potassium efflux system that confers protection against electrophiles. Required for full activity of KefB. The sequence is that of Glutathione-regulated potassium-efflux system ancillary protein KefG from Enterobacter sp. (strain 638).